Here is a 291-residue protein sequence, read N- to C-terminus: Elongation factor Ts (291 aa).

The tract at residues 79 to 82 is involved in Mg(2+) ion dislocation from EF-Tu; it reads TDFV.

This sequence belongs to the EF-Ts family.

Its subcellular location is the cytoplasm. In terms of biological role, associates with the EF-Tu.GDP complex and induces the exchange of GDP to GTP. It remains bound to the aminoacyl-tRNA.EF-Tu.GTP complex up to the GTP hydrolysis stage on the ribosome. The polypeptide is Elongation factor Ts (Jannaschia sp. (strain CCS1)).